Consider the following 159-residue polypeptide: Transcription elongation factor A protein-like 1 (159 aa).

Residues 1 to 120 (MEKACKEPEE…PQFRGDIHGR (120 aa)) form a disordered region. Residues 17–34 (KADEERPSVEPSPEKSSP) show a composition bias toward basic and acidic residues. The span at 37 to 54 (QSSEEVSSEEEFFPDELL) shows a compositional bias: acidic residues. Basic and acidic residues-rich tracts occupy residues 64–80 (SEERPPQERLSRKDLFE) and 95–119 (HKLEEGSFKERLARSRPQFRGDIHG).

Belongs to the TFS-II family. TFA subfamily.

It is found in the nucleus. Functionally, may be involved in transcriptional regulation. Modulates various viral and cellular promoters in a promoter context-dependent manner. Does not bind DNA directly. This is Transcription elongation factor A protein-like 1 from Bos taurus (Bovine).